The chain runs to 480 residues: Plant UBX domain-containing protein 10 (480 aa).

Disordered stretches follow at residues 47–78 (DASS…PRGI) and 335–383 (ADQA…AARV). Residues 330–389 (RAALEADQAREQQRQEEKERLEREAAEAERKLKEEEEARERAAREAEERQAARVRMRQEK) are a coiled coil. Residues 336–383 (DQAREQQRQEEKERLEREAAEAERKLKEEEEARERAAREAEERQAARV) are compositionally biased toward basic and acidic residues. Residues 399 to 477 (KGPDVTQVLV…GLHPQASLFI (79 aa)) form the UBX domain.

The protein is Plant UBX domain-containing protein 10 of Arabidopsis thaliana (Mouse-ear cress).